The following is a 458-amino-acid chain: Phosphoglucosamine mutase (458 aa).

S100 functions as the Phosphoserine intermediate in the catalytic mechanism. The Mg(2+) site is built by S100, D254, D256, and D258. Phosphoserine is present on S100.

The protein belongs to the phosphohexose mutase family. It depends on Mg(2+) as a cofactor. In terms of processing, activated by phosphorylation.

The catalysed reaction is alpha-D-glucosamine 1-phosphate = D-glucosamine 6-phosphate. Its function is as follows. Catalyzes the conversion of glucosamine-6-phosphate to glucosamine-1-phosphate. This is Phosphoglucosamine mutase from Nocardia farcinica (strain IFM 10152).